We begin with the raw amino-acid sequence, 242 residues long: Probable transcriptional regulatory protein BamMC406_2210 (242 aa).

Belongs to the TACO1 family.

It localises to the cytoplasm. This Burkholderia ambifaria (strain MC40-6) protein is Probable transcriptional regulatory protein BamMC406_2210.